We begin with the raw amino-acid sequence, 313 residues long: DNA-directed RNA polymerase subunit alpha (313 aa).

The segment at 1-226 (MLEIEKPKIE…EHMRLFLGLT (226 aa)) is alpha N-terminal domain (alpha-NTD). Residues 242-313 (TRDRLMDMSI…LGLSLRSSEE (72 aa)) are alpha C-terminal domain (alpha-CTD).

It belongs to the RNA polymerase alpha chain family. In terms of assembly, homodimer. The RNAP catalytic core consists of 2 alpha, 1 beta, 1 beta' and 1 omega subunit. When a sigma factor is associated with the core the holoenzyme is formed, which can initiate transcription.

The catalysed reaction is RNA(n) + a ribonucleoside 5'-triphosphate = RNA(n+1) + diphosphate. Its function is as follows. DNA-dependent RNA polymerase catalyzes the transcription of DNA into RNA using the four ribonucleoside triphosphates as substrates. The protein is DNA-directed RNA polymerase subunit alpha of Moorella thermoacetica (strain ATCC 39073 / JCM 9320).